Consider the following 867-residue polypeptide: MSERAADDVRGEPRRAAGGAAAARQQQQQPQPLQPQRQHPPLRRPRAEDGGTGDTTTSAAAMATVGERRPLPSPEAMLGQSWNLWVEASKLPGKDGTELDESFKEFGKNREVMGLCREDMPIFGLCPAHDDFYLVVCNDCNQVVKPQAFQSHYERRHSSSSKPALAVPHTSVFSLLPSLSKSKGSGAGGSSRPPSGGVLCASSSSKLLRLPKEKLPLRGNMKPMHPVQQIKVPHGRVMTPSVKVEKMHPKMDGTLLKSTVGPACPATMSSAVKPGLNCPSIPKPTLPSPGQILNGKGLPAMPTLEKKSEDSSNNRKFLNKRLSEREFDPDIHCGVIDLDTKKPCTRSLTCKTHSLTQRRAVQGRRKRFDVLLAEHKNKAREKELIRHDSQQVPHPLRDPHPTPPRTPQEPQLPAESKPFLASKPKPQTPSLPRPPGCPAQQGGSTPIDPPPGQESPHPPLPATEPASRLSSEEGEGDDREESVEKLDCHYSGRHPQPASFCTFGSRQIGRGYYVFDSRWNRLRCALNLMVEKHLNAQLWKKIPPVPCTTSPVSARVPHRTNSVPTSQGGISYLAATTVSAPPVLLSSTCISPNSKSVPAHGTTLNAQPAGSGAMDPVCSVQSRQVSASSSPPSTPSGLSSVPSSPLSRKPQKWKPSKSIRPKESSALSTNCHNASSSTSGGSGKKRKNSSPLLVPSSSSSSSSSSSSSHSVNSFRKNCVAHSGTPYLSTAPSSHSIGLNCVTNKTHSVSLRHEQAGRGPAGVSSAEPIKRMSVMVNSSDSTLSLGPFIHQASELPVNPHSHTPLDKLIGKKRKCSPGSSTVGNSGSKPTKVAKLPAMNNVHMKHTGNISGAQGLTNNSLLHQPKARP.

Over residues 1–15 (MSERAADDVRGEPRR) the composition is skewed to basic and acidic residues. The tract at residues 1–59 (MSERAADDVRGEPRRAAGGAAAARQQQQQPQPLQPQRQHPPLRRPRAEDGGTGDTTTSA) is disordered. Positions 16–39 (AAGGAAAARQQQQQPQPLQPQRQH) are enriched in low complexity. Lys222 bears the N6-acetyllysine mark. A Glycyl lysine isopeptide (Lys-Gly) (interchain with G-Cter in SUMO); alternate cross-link involves residue Lys243. Lys243 participates in a covalent cross-link: Glycyl lysine isopeptide (Lys-Gly) (interchain with G-Cter in SUMO2); alternate. The region spanning 320 to 387 (KRLSEREFDP…KAREKELIRH (68 aa)) is the SCA7 domain. Basic and acidic residues predominate over residues 379 to 400 (AREKELIRHDSQQVPHPLRDPH). Disordered regions lie at residues 379–483 (AREK…EESV), 600–711 (HGTT…SHSV), and 845–867 (TGNI…KARP). 2 stretches are compositionally biased toward pro residues: residues 426–437 (PQTPSLPRPPGC) and 447–462 (IDPP…PLPA). The span at 472 to 481 (EEGEGDDREE) shows a compositional bias: acidic residues. A compositionally biased stretch (low complexity) spans 619-647 (SVQSRQVSASSSPPSTPSGLSSVPSSPLS). Basic residues predominate over residues 649–659 (KPQKWKPSKSI). Polar residues predominate over residues 665-674 (SALSTNCHNA). Residues 689-711 (SSPLLVPSSSSSSSSSSSSSHSV) are compositionally biased toward low complexity. The span at 846-860 (GNISGAQGLTNNSLL) shows a compositional bias: polar residues.

It belongs to the ataxin-7 family. In terms of assembly, component of the SAGA transcription coactivator-HAT complex, at least composed of SUPT3H, GCN5L2, TAF5L, TAF6L, SUPT7L, TADA3L, TAD1L, TAF10, TAF12, TRRAP, TAF9 and ATXN7. The STAGA core complex is associated with a subcomplex required for histone deubiquitination composed of ATXN7L3, ENY2 and USP22. Interacts with SORBS1, PSMC1 and CRX. Interacts with TRRAP, GCN5L2 and TAF10. Interacts with alpha tubulin. Proteolytically cleaved by caspase-7 (CASP7). In terms of processing, sumoylation has no effect on subcellular location or interaction with components of the STAGA complex. As to expression, widely expressed in adult tissues, with the highest expression in heart, brain, liver and kidney.

Its subcellular location is the nucleus. The protein localises to the nucleolus. It is found in the nucleus matrix. It localises to the cytoplasm. The protein resides in the cytoskeleton. In terms of biological role, acts as a component of the SAGA (aka STAGA) transcription coactivator-HAT complex. Mediates the interaction of SAGA complex with the CRX and is involved in CRX-dependent gene activation. Probably involved in tethering the deubiquitination module within the SAGA complex. Necessary for microtubule cytoskeleton stabilization. Involved in neurodegeneration. This is Ataxin-7 (Atxn7) from Mus musculus (Mouse).